The following is a 266-amino-acid chain: Apolipoprotein A-I (266 aa).

Positions 1–18 (MKAVVLTLAVLFLTGSQA) are cleaved as a signal peptide. Tandem repeats lie at residues 67 to 88 (LKLL…EQIG) and 89 to 110 (PVTQ…QEMN). The interval 67-266 (LKLLDNWDSL…DEATKKLNSQ (200 aa)) is 10 X approximate tandem repeats. Position 109 is a methionine sulfoxide (Met109). The 3; half-length repeat unit spans residues 111–121 (KDLEEVKKKVQ). 5 consecutive repeat copies span residues 122–143 (PYLD…QKVA), 144–165 (PLGA…EKLS), 166–187 (PLGE…AQLA), 188–209 (PYSE…EGGG), and 210–231 (AALT…EKAK). One copy of the 9; half-length repeat lies at 232–242 (PALEDLRQGLL). Residues 243–266 (PVLENFRDSLLAAVDEATKKLNSQ) form repeat 10.

It belongs to the apolipoprotein A1/A4/E family. In terms of assembly, homodimer. Interacts with APOA1BP and CLU. Component of a sperm activating protein complex (SPAP), consisting of APOA1, an immunoglobulin heavy chain, an immunoglobulin light chain and albumin. Interacts with NDRG1. Interacts with SCGB3A2. Interacts with NAXE and YJEFN3. Post-translationally, glycosylated. Palmitoylated. In terms of processing, phosphorylation sites are present in the extracellular medium.

It localises to the secreted. Its function is as follows. Participates in the reverse transport of cholesterol from tissues to the liver for excretion by promoting cholesterol efflux from tissues and by acting as a cofactor for the lecithin cholesterol acyltransferase (LCAT). As part of the SPAP complex, activates spermatozoa motility. The polypeptide is Apolipoprotein A-I (APOA1) (Neomonachus schauinslandi (Hawaiian monk seal)).